An 879-amino-acid polypeptide reads, in one-letter code: Translation initiation factor IF-2 (879 aa).

2 disordered regions span residues 45 to 216 (AGHM…ERKR) and 228 to 293 (SYEE…EKPV). 3 stretches are compositionally biased toward basic and acidic residues: residues 60 to 72 (NAAK…DKNS), 83 to 99 (RKTD…KISP), and 107 to 163 (AEKK…ERLQ). Low complexity predominate over residues 164–173 (MEAALQAQMQ). Composition is skewed to basic and acidic residues over residues 174–216 (EQER…ERKR), 228–271 (SYEE…ERRN), and 280–291 (RNNDNKKGKFEK). In terms of domain architecture, tr-type G spans 380-549 (VRAPVVTIMG…LIQAEMLELT (170 aa)). A G1 region spans residues 389–396 (GHVDHGKT). 389 to 396 (GHVDHGKT) provides a ligand contact to GTP. A G2 region spans residues 414–418 (GITQH). The interval 435-438 (DTPG) is G3. GTP is bound by residues 435-439 (DTPGH) and 489-492 (NKMD). A G4 region spans residues 489–492 (NKMD). The segment at 525-527 (SAK) is G5.

This sequence belongs to the TRAFAC class translation factor GTPase superfamily. Classic translation factor GTPase family. IF-2 subfamily.

The protein resides in the cytoplasm. Functionally, one of the essential components for the initiation of protein synthesis. Protects formylmethionyl-tRNA from spontaneous hydrolysis and promotes its binding to the 30S ribosomal subunits. Also involved in the hydrolysis of GTP during the formation of the 70S ribosomal complex. This is Translation initiation factor IF-2 from Dichelobacter nodosus (strain VCS1703A).